Here is a 523-residue protein sequence, read N- to C-terminus: F-box only protein 31-B (523 aa).

Positions 59–105 constitute an F-box domain; sequence PRSLLQLPPEILVEIFSSLPGTELPSLAQVCRKFRQILTTDTIWKRR. The Zn(2+) site is built by cysteine 201, histidine 209, cysteine 225, and histidine 231. Residues 372 to 427 are disordered; that stretch reads IQREQRQTGNEEDDGKGAGPDRAEHSQQPAPVHRPAKEDVNGVDNADDREQKPPNV. 2 stretches are compositionally biased toward basic and acidic residues: residues 386-396 and 406-423; these read GKGAGPDRAEH and PAKEDVNGVDNADDREQK.

It belongs to the FBXO31 family. Part of a SCF (SKP1-cullin-F-box) protein ligase complex SCF(FBXO31).

It is found in the cytoplasm. The protein operates within protein modification; protein ubiquitination. In terms of biological role, substrate-recognition component of the SCF(FBXO31) protein ligase complex, which specifically mediates the ubiquitination of proteins amidated at their C-terminus in response to oxidative stress, leading to their degradation by the proteasome. Fbxo31 specifically recognizes and binds C-terminal peptides bearing an amide: C-terminal amidation in response to oxidative stress takes place following protein fragmentation. The SCF(FBXO31) also plays a role in G1 arrest following DNA damage by mediating ubiquitination of phosphorylated cyclin-D1 (ccnd1), promoting its degradation by the proteasome, resulting in G1 arrest. The SCF(FBXO31) complex is however not a major regulator of ccnd1 stability during the G1/S transition. The protein is F-box only protein 31-B (fbxo31-b) of Xenopus laevis (African clawed frog).